The chain runs to 355 residues: Trans-3-hydroxy-L-proline dehydratase (355 aa).

The active-site Proton acceptor is C111. Substrate is bound by residues 112-113 (GH) and 276-277 (GS).

The protein belongs to the proline racemase family. As to quaternary structure, homodimer.

The catalysed reaction is trans-3-hydroxy-L-proline = 1-pyrroline-2-carboxylate + H2O. Functionally, catalyzes the dehydration of trans-3-hydroxy-L-proline (t3LHyp) to Delta(1)-pyrroline-2-carboxylate (Pyr2C). Together with LhpI, is involved in a metabolic pathway that converts t3LHyp to L-proline. This chain is Trans-3-hydroxy-L-proline dehydratase, found in Colwellia psychrerythraea (strain 34H / ATCC BAA-681) (Vibrio psychroerythus).